Consider the following 278-residue polypeptide: Small ribosomal subunit biogenesis GTPase RsgA (278 aa).

Residues 62-218 enclose the CP-type G domain; the sequence is KNELTRPRVA…ICDTPGFNVI (157 aa). GTP is bound by residues 112-115 and 162-170; these read TKTD and GQSGVGKSS. Residues cysteine 241, cysteine 246, histidine 248, and cysteine 254 each contribute to the Zn(2+) site.

Belongs to the TRAFAC class YlqF/YawG GTPase family. RsgA subfamily. As to quaternary structure, monomer. Associates with 30S ribosomal subunit, binds 16S rRNA. Zn(2+) serves as cofactor.

Its subcellular location is the cytoplasm. One of several proteins that assist in the late maturation steps of the functional core of the 30S ribosomal subunit. Helps release RbfA from mature subunits. May play a role in the assembly of ribosomal proteins into the subunit. Circularly permuted GTPase that catalyzes slow GTP hydrolysis, GTPase activity is stimulated by the 30S ribosomal subunit. The chain is Small ribosomal subunit biogenesis GTPase RsgA from Mycoplasma genitalium (strain ATCC 33530 / DSM 19775 / NCTC 10195 / G37) (Mycoplasmoides genitalium).